The chain runs to 207 residues: Interleukin-6 (207 aa).

The signal sequence occupies residues 1–18 (MKFFSIASLGLLLVVATA). The disordered stretch occupies residues 26-47 (REDGENSVTRNKPTRASSGKTR). Residues 31–44 (NSVTRNKPTRASSG) show a composition bias toward polar residues. The cysteines at positions 65 and 71 are disulfide-linked. Position 74 is a phosphoserine (Ser74). An intrachain disulfide couples Cys94 to Cys104.

Belongs to the IL-6 superfamily. As to quaternary structure, component of a hexamer of two molecules each of IL6, IL6R and IL6ST; first binds to IL6R to associate with the signaling subunit IL6ST. Interacts with IL6R (via the N-terminal ectodomain); this interaction may be affected by IL6R-binding with SORL1, hence decreasing IL6 cis signaling. Interacts with SORL1 (via the N-terminal ectodomain); this interaction leads to IL6 internalization and lysosomal degradation. May form a trimeric complex with the soluble SORL1 ectodomain and soluble IL6R receptor; this interaction might stabilize circulating IL6, hence promoting IL6 trans signaling.

The protein resides in the secreted. In terms of biological role, cytokine with a wide variety of biological functions in immunity, tissue regeneration, and metabolism. Binds to IL6R, then the complex associates to the signaling subunit IL6ST/gp130 to trigger the intracellular IL6-signaling pathway. The interaction with the membrane-bound IL6R and IL6ST stimulates 'classic signaling', whereas the binding of IL6 and soluble IL6R to IL6ST stimulates 'trans-signaling'. Alternatively, 'cluster signaling' occurs when membrane-bound IL6:IL6R complexes on transmitter cells activate IL6ST receptors on neighboring receiver cells. Its function is as follows. IL6 is a potent inducer of the acute phase response. Rapid production of IL6 contributes to host defense during infection and tissue injury, but excessive IL6 synthesis is involved in disease pathology. In the innate immune response, is synthesized by myeloid cells, such as macrophages and dendritic cells, upon recognition of pathogens through toll-like receptors (TLRs) at the site of infection or tissue injury. In the adaptive immune response, is required for the differentiation of B cells into immunoglobulin-secreting cells. Plays a major role in the differentiation of CD4(+) T cell subsets. Essential factor for the development of T follicular helper (Tfh) cells that are required for the induction of germinal-center formation. Required to drive naive CD4(+) T cells to the Th17 lineage. Also required for proliferation of myeloma cells and the survival of plasmablast cells. Acts as an essential factor in bone homeostasis and on vessels directly or indirectly by induction of VEGF, resulting in increased angiogenesis activity and vascular permeability. Induces, through 'trans-signaling' and synergistically with IL1B and TNF, the production of VEGF. Involved in metabolic controls, is discharged into the bloodstream after muscle contraction increasing lipolysis and improving insulin resistance. 'Trans-signaling' in central nervous system also regulates energy and glucose homeostasis. Mediates, through GLP-1, crosstalk between insulin-sensitive tissues, intestinal L cells and pancreatic islets to adapt to changes in insulin demand. Also acts as a myokine. Plays a protective role during liver injury, being required for maintenance of tissue regeneration. Also has a pivotal role in iron metabolism by regulating HAMP/hepcidin expression upon inflammation or bacterial infection. Through activation of IL6ST-YAP-NOTCH pathway, induces inflammation-induced epithelial regeneration. The protein is Interleukin-6 (IL6) of Marmota monax (Woodchuck).